The primary structure comprises 514 residues: MAVWHSANGKVYLPPSTPVARVQSTDEYIQRTNIYYHANTDRLLTVGHPYFNVYNNNGTTLEVPKVSGNQHRVFRLKLPDPNRFALADMSVYNPDKERLVWACRGLEIGRGQPLGVGSTGHPYFNKVKDTENSNSYITNSKDDRQDTSFDPKQIQMFIVGCTPCIGEHWDKAEPCGEQQTGLCPPIELKNTYIQDGDMADIGFGNINFKALQHSRSDVSLDIVNETCKYPDFLKMQNDVYGDACFFYARREQCYARHFFVRGGKTGDDIPGAQVGNGNMKNQFYIPGATGQAQSTIGNAMYFPTVSGSLVSSDAQLFNRPFWLQRAQGHNNGILWANQMFVTVVDNTRNTNFSISVYSQAGDIKDIQDYNADNFREYQRHVEEYEISVILQLCKVPLKAEVLAQINAMNSSLLEEWQLGFVPTPDNPIQDTYRYLESLATRCPEKSPPKEKVDPYKGLNFWDVDMTERLSLDLDQYSLGRKFLFQAGLQQTTVNGTKTTPYRGSIRGTKRKRKN.

Residues 495-514 are disordered; sequence GTKTTPYRGSIRGTKRKRKN.

This sequence belongs to the papillomaviridae L1 protein family. In terms of assembly, self-assembles into homopentamers. The capsid has an icosahedral symmetry and consists of 72 capsomers, with each capsomer being a pentamer of L1. Interacts with the minor capsid protein L2; this interaction is necessary for viral genome encapsidation. Interacts with protein E2; this interaction enhances E2-dependent replication and transcription activation.

It is found in the virion. Its subcellular location is the host nucleus. Functionally, forms an icosahedral capsid with a T=7 symmetry and a 50 nm diameter. The capsid is composed of 72 pentamers linked to each other by disulfide bonds and associated with L2 proteins. Binds to heparan sulfate proteoglycans on cell surface of basal layer keratinocytes to provide initial virion attachment. This binding mediates a conformational change in the virus capsid that facilitates efficient infection. The virion enters the host cell via endocytosis. During virus trafficking, L1 protein dissociates from the viral DNA and the genomic DNA is released to the host nucleus. The virion assembly takes place within the cell nucleus. Encapsulates the genomic DNA together with protein L2. The sequence is that of Major capsid protein L1 from Human papillomavirus 47.